Consider the following 280-residue polypeptide: Bifunctional protein FolD (280 aa).

NADP(+) is bound by residues 166 to 168 (GRS) and serine 191.

This sequence belongs to the tetrahydrofolate dehydrogenase/cyclohydrolase family. As to quaternary structure, homodimer.

The catalysed reaction is (6R)-5,10-methylene-5,6,7,8-tetrahydrofolate + NADP(+) = (6R)-5,10-methenyltetrahydrofolate + NADPH. It catalyses the reaction (6R)-5,10-methenyltetrahydrofolate + H2O = (6R)-10-formyltetrahydrofolate + H(+). It participates in one-carbon metabolism; tetrahydrofolate interconversion. Functionally, catalyzes the oxidation of 5,10-methylenetetrahydrofolate to 5,10-methenyltetrahydrofolate and then the hydrolysis of 5,10-methenyltetrahydrofolate to 10-formyltetrahydrofolate. This chain is Bifunctional protein FolD, found in Saccharophagus degradans (strain 2-40 / ATCC 43961 / DSM 17024).